Reading from the N-terminus, the 405-residue chain is MATPGNLGSSVLASKTKTKKKHFVAQKVKLFRASDPLLSVLMWGVNHSINELSHVQIPVMLMPDDFKAYSKIKVDNHLFNKENMPSHFKFKEYCPMVFRNLRERFGIDDQDFQNSLTRSAPLPNDSQARSGARFHTSYDKRYVIKTITSEDVAEMHNILKKYHQYIVECHGVTLLPQFLGMYRLNVDGVEIYVIVTRNVFSHRLSVYRKYDLKGSTVAREASDKEKAKELPTLKDNDFINEGQKIYIDDNNKKIFLEKLKKDVEFLAQLKLMDYSLLVGIHDVERAEQEEVECEENDGEEEGESDSTHPIGTPPDSPGNTLNSSPPLAPGEFDPNIDVYAIKCHENAPRKEVYFMAIIDILTHYDAKKKAAHAAKTVKHGAGAEISTVNPEQYSKRFLDFIGHIL.

Ala-2 is subject to N-acetylalanine. Thr-3 carries the post-translational modification Phosphothreonine. Ser-14 is modified (phosphoserine). The PIPK domain occupies 33-405 (ASDPLLSVLM…RFLDFIGHIL (373 aa)). The required for interaction with PIP5K1A stretch occupies residues 59 to 65 (VMLMPDD). N6-acetyllysine occurs at positions 89 and 145. The interval 288 to 328 (QEEVECEENDGEEEGESDSTHPIGTPPDSPGNTLNSSPPLA) is disordered. The span at 289–304 (EEVECEENDGEEEGES) shows a compositional bias: acidic residues.

Homodimer. Interacts with PIP4K2B; the interaction may regulate localization to the nucleus. Probably interacts with PIP5K1A; the interaction inhibits PIP5K1A kinase activity. In terms of processing, phosphorylated in tyrosines. Phosphorylation is induced by light and increases kinase activity. In terms of tissue distribution, detected in rod photoreceptor cells.

The protein resides in the cell membrane. It localises to the nucleus. It is found in the lysosome. Its subcellular location is the cytoplasm. The protein localises to the photoreceptor inner segment. The protein resides in the cell projection. It localises to the cilium. It is found in the photoreceptor outer segment. It carries out the reaction a 1,2-diacyl-sn-glycero-3-phospho-(1D-myo-inositol-5-phosphate) + ATP = a 1,2-diacyl-sn-glycero-3-phospho-(1D-myo-inositol-4,5-bisphosphate) + ADP + H(+). The enzyme catalyses 1,2-dihexadecanoyl-sn-glycero-3-phospho-(1D-myo-inositol-5-phosphate) + ATP = 1,2-dihexadecanoyl-sn-glycero-3-phospho-(1D-myo-inositol-4,5-bisphosphate) + ADP + H(+). It catalyses the reaction 1,2-dihexadecanoyl-sn-glycero-3-phospho-(1D-myo-inositol-5-phosphate) + GTP = 1,2-dihexadecanoyl-sn-glycero-3-phospho-(1D-myo-inositol-4,5-bisphosphate) + GDP + H(+). In rod outer segments, activated by light. In terms of biological role, catalyzes the phosphorylation of phosphatidylinositol 5-phosphate (PtdIns5P) on the fourth hydroxyl of the myo-inositol ring, to form phosphatidylinositol 4,5-bisphosphate (PtdIns(4,5)P2). Has both ATP- and GTP-dependent kinase activities. May exert its function by regulating the levels of PtdIns5P, which functions in the cytosol by increasing AKT activity and in the nucleus signals through ING2. May regulate the pool of cytosolic PtdIns5P in response to the activation of tyrosine phosphorylation. Required for lysosome-peroxisome membrane contacts and intracellular cholesterol transport through modulating peroxisomal PtdIns(4,5)P2 level. In collaboration with PIP4K2B, has a role in mediating autophagy in times of nutrient stress. Required for autophagosome-lysosome fusion and the regulation of cellular lipid metabolism. Negatively regulates insulin signaling through a catalytic-independent mechanism. PIP4Ks interact with PIP5Ks and suppress PIP5K-mediated PtdIns(4,5)P2 synthesis and insulin-dependent conversion to PtdIns(3,4,5)P3. May be involved in thrombopoiesis, and the terminal maturation of megakaryocytes and regulation of their size. This Mus musculus (Mouse) protein is Phosphatidylinositol 5-phosphate 4-kinase type-2 alpha.